The sequence spans 3456 residues: Genome polyprotein (3456 aa).

Residues 600–743 (NVANIPLDDF…ATRLKQIQFY (144 aa)) enclose the Peptidase S30 domain. Active-site for P1 proteinase activity residues include His640, Asp652, and Ser689. The region spanning 1075–1196 (VWEFNEGYCY…EGEMLTYKVG (122 aa)) is the Peptidase C6 domain. The For helper component proteinase activity role is filled by Cys1083. One copy of the HAT 1 repeat lies at 1094–1126 (FINEDEMEFYKNQMNQIVLNLGAWPTFEQYLVE). His1155 acts as the For helper component proteinase activity in catalysis. The 152-residue stretch at 1617–1768 (NIRTSGETDV…TRHKIKVETL (152 aa)) folds into the Helicase ATP-binding domain. ATP is bound at residue 1630 to 1637 (SGVGGGKS). The Helicase C-terminal domain maps to 1787–1947 (DATSVGDVIL…GIKPVCDRVD (161 aa)). Tyr2304 carries the post-translational modification O-(5'-phospho-RNA)-tyrosine. Residues 2412–2636 (AVDSHVGTPT…VEWSRLLPTT (225 aa)) enclose the Peptidase C4 domain. Active-site for nuclear inclusion protein A activity residues include His2457, Asp2494, and Cys2566. The HAT 2 repeat unit spans residues 2597–2629 (HIFEPVNETFIEMLAKMEYAKGFWKFNPELVEW). Residues 2891-3011 (WVFIDCDGSR…NCPRSTANAI (121 aa)) enclose the RdRp catalytic domain. The stretch at 3082–3115 (LNAAYIESFGYEDLMTEIEKFAHFWAKKHGLNDV) is one HAT 3 repeat.

In terms of processing, VPg is uridylylated by the polymerase and is covalently attached to the 5'-end of the genomic RNA. This uridylylated form acts as a nucleotide-peptide primer for the polymerase. Post-translationally, genome polyprotein of potyviruses undergoes post-translational proteolytic processing by the main proteinase NIa-pro resulting in the production of at least ten individual proteins. The P1 proteinase and the HC-pro cleave only their respective C-termini autocatalytically. 6K1 is essential for proper proteolytic separation of P3 from CI.

The protein localises to the host cytoplasmic vesicle. It is found in the virion. The catalysed reaction is RNA(n) + a ribonucleoside 5'-triphosphate = RNA(n+1) + diphosphate. It catalyses the reaction Hydrolyzes glutaminyl bonds, and activity is further restricted by preferences for the amino acids in P6 - P1' that vary with the species of potyvirus, e.g. Glu-Xaa-Xaa-Tyr-Xaa-Gln-|-(Ser or Gly) for the enzyme from tobacco etch virus. The natural substrate is the viral polyprotein, but other proteins and oligopeptides containing the appropriate consensus sequence are also cleaved.. The enzyme catalyses Hydrolyzes a Gly-|-Gly bond at its own C-terminus, commonly in the sequence -Tyr-Xaa-Val-Gly-|-Gly, in the processing of the potyviral polyprotein.. Functionally, required for aphid transmission and also has proteolytic activity. Only cleaves a Gly-Gly dipeptide at its own C-terminus. Interacts with virions and aphid stylets. Acts as a suppressor of RNA-mediated gene silencing, also known as post-transcriptional gene silencing (PTGS), a mechanism of plant viral defense that limits the accumulation of viral RNAs. May have RNA-binding activity. In terms of biological role, has helicase activity. It may be involved in replication. Indispensable for virus replication. Its function is as follows. Mediates the cap-independent, EIF4E-dependent translation of viral genomic RNAs. Binds to the cap-binding site of host EIF4E and thus interferes with the host EIF4E-dependent mRNA export and translation. VPg-RNA directly binds EIF4E and is a template for transcription. Also forms trimeric complexes with EIF4E-EIF4G, which are templates for translation. Functionally, has RNA-binding and proteolytic activities. In terms of biological role, an RNA-dependent RNA polymerase that plays an essential role in the virus replication. Involved in aphid transmission, cell-to-cell and systemis movement, encapsidation of the viral RNA and in the regulation of viral RNA amplification. This chain is Genome polyprotein, found in Sweet potato mild mottle virus (isolate Salazar) (SPMMV).